Reading from the N-terminus, the 416-residue chain is Solute carrier family 25 member 46 (416 aa).

Residues 1 to 13 (MQPRRPDRFDGLE) are compositionally biased toward basic and acidic residues. A disordered region spans residues 1–91 (MQPRRPDRFD…GEESSSSSSG (91 aa)). Residues 37 to 49 (SFSSSGDLSQHWV) are compositionally biased toward polar residues. The segment covering 82-91 (GEESSSSSSG) has biased composition (low complexity). The Solcar 1 repeat unit spans residues 94 to 185 (HLNRFAGFGI…GMLSEFTHLP (92 aa)). Helical transmembrane passes span 101 to 121 (FGIG…CIVL), 161 to 181 (MGST…LSEF), 197 to 217 (IGGH…FYSA), 256 to 276 (LLPL…HYII), 312 to 332 (FPEL…LYPL), and 381 to 401 (LGFY…AIVL). A Solcar 2 repeat occupies 309–414 (EDYFPELIAN…KIIYSSVVQT (106 aa)).

Belongs to the mitochondrial carrier (TC 2.A.29) family.

It is found in the mitochondrion outer membrane. Functionally, may play a role in mitochondrial dynamics by controlling mitochondrial membrane fission. In Xenopus tropicalis (Western clawed frog), this protein is Solute carrier family 25 member 46 (slc25a46).